A 185-amino-acid polypeptide reads, in one-letter code: Ribosome-recycling factor (185 aa).

Belongs to the RRF family.

It localises to the cytoplasm. Its function is as follows. Responsible for the release of ribosomes from messenger RNA at the termination of protein biosynthesis. May increase the efficiency of translation by recycling ribosomes from one round of translation to another. The polypeptide is Ribosome-recycling factor (Streptococcus pyogenes serotype M28 (strain MGAS6180)).